Here is a 589-residue protein sequence, read N- to C-terminus: UvrABC system protein C (589 aa).

A GIY-YIG domain is found at 13-90; sequence PNPGCYLFKN…IKTHTPKYNF (78 aa). A UVR domain is found at 194-229; the sequence is KDILKKLHHLMQKASEKMFYEKAQEYRDIIDSIKQT.

Belongs to the UvrC family. As to quaternary structure, interacts with UvrB in an incision complex.

The protein resides in the cytoplasm. Functionally, the UvrABC repair system catalyzes the recognition and processing of DNA lesions. UvrC both incises the 5' and 3' sides of the lesion. The N-terminal half is responsible for the 3' incision and the C-terminal half is responsible for the 5' incision. This chain is UvrABC system protein C, found in Aster yellows witches'-broom phytoplasma (strain AYWB).